A 302-amino-acid polypeptide reads, in one-letter code: Protocatechuate 4,5-dioxygenase beta chain (302 aa).

Composed of two subunits (alpha and beta) in a 1:1 ratio. Fe(2+) serves as cofactor.

It catalyses the reaction 3,4-dihydroxybenzoate + O2 = 4-carboxy-2-hydroxy-cis,cis-muconate 6-semialdehyde + H(+). Functionally, responsible for the aromatic ring fission of protocatechuate. The polypeptide is Protocatechuate 4,5-dioxygenase beta chain (ligB) (Sphingobium sp. (strain NBRC 103272 / SYK-6)).